A 68-amino-acid polypeptide reads, in one-letter code: MDQVTKFIEPGRQFAKDSIRLVKRCTKPDRKEFQKIAVATAIGFCIMGFIGFFVKLIHIPINNIIVGS.

Topologically, residues 1–32 (MDQVTKFIEPGRQFAKDSIRLVKRCTKPDRKE) are cytoplasmic. The chain crosses the membrane as a helical span at residues 33 to 61 (FQKIAVATAIGFCIMGFIGFFVKLIHIPI). The Extracellular portion of the chain corresponds to 62–68 (NNIIVGS).

The protein belongs to the SecE/SEC61-gamma family. In terms of assembly, heterotrimeric complex composed of SEC61-alpha, SEC61-beta and SEC61-gamma.

It is found in the endoplasmic reticulum membrane. In terms of biological role, necessary for protein translocation in the endoplasmic reticulum. This is Protein transport protein Sec61 subunit gamma (SEC61G) from Gryllotalpa orientalis (Oriental mole cricket).